The chain runs to 178 residues: Small ribosomal subunit protein uS4 (178 aa).

In terms of domain architecture, S4 RNA-binding spans 104–166 (RRLQTLVYRK…PNSPMALENH (63 aa)).

This sequence belongs to the universal ribosomal protein uS4 family. As to quaternary structure, part of the 30S ribosomal subunit. Contacts protein S5. The interaction surface between S4 and S5 is involved in control of translational fidelity.

One of the primary rRNA binding proteins, it binds directly to 16S rRNA where it nucleates assembly of the body of the 30S subunit. In terms of biological role, with S5 and S12 plays an important role in translational accuracy. The polypeptide is Small ribosomal subunit protein uS4 (Methanococcus vannielii (strain ATCC 35089 / DSM 1224 / JCM 13029 / OCM 148 / SB)).